We begin with the raw amino-acid sequence, 359 residues long: N-acetylneuraminate-9-phosphate synthase (359 aa).

An N6-acetyllysine mark is found at K61, K74, and K79. S275 carries the phosphoserine modification. K290 carries the post-translational modification N6-acetyllysine. Residues 294–353 (SVVAKVKIPEGTILTMDMLTVKVGEPKGYPPEDIFNLVGKKVLVTVEEDDTIMEELVDNH) form the AFP-like domain.

Ubiquitous.

The catalysed reaction is aldehydo-N-acetyl-D-mannosamine 6-phosphate + phosphoenolpyruvate + H2O = N-acetylneuraminate 9-phosphate + phosphate. It catalyses the reaction aldehydo-D-mannose 6-phosphate + phosphoenolpyruvate + H2O = 3-deoxy-D-glycero-beta-D-galacto-non-2-ulopyranosonate 9-phosphate + phosphate. Its function is as follows. Catalyzes the condensation of phosphoenolpyruvate (PEP) and N-acetylmannosamine 6-phosphate (ManNAc-6-P) to synthesize N-acetylneuraminate-9-phosphate (Neu5Ac-9-P). Also catalyzes the condensation of PEP and D-mannose 6-phosphate (Man-6-P) to produce 3-deoxy-D-glycero-beta-D-galacto-non-2-ulopyranosonate 9-phosphate (KDN-9-P). Neu5Ac-9-P and KDN-9-P are the phosphorylated forms of sialic acids N-acetylneuraminic acid (Neu5Ac) and deaminoneuraminic acid (KDN), respectively. Required for brain and skeletal development. This Homo sapiens (Human) protein is N-acetylneuraminate-9-phosphate synthase.